Here is a 135-residue protein sequence, read N- to C-terminus: Global transcriptional regulator Spx 2 (135 aa).

Residue cysteine 10 is part of the active site.

The protein belongs to the ArsC family. Spx subfamily. As to quaternary structure, interacts with the C-terminal domain of the alpha subunit of the RNAP.

The protein resides in the cytoplasm. In terms of biological role, global transcriptional regulator that plays a key role in stress response and exerts either positive or negative regulation of genes. Acts by interacting with the C-terminal domain of the alpha subunit of the RNA polymerase (RNAP). This interaction can enhance binding of RNAP to the promoter region of target genes and stimulate their transcription, or block interaction of RNAP with activator. The polypeptide is Global transcriptional regulator Spx 2 (Oceanobacillus iheyensis (strain DSM 14371 / CIP 107618 / JCM 11309 / KCTC 3954 / HTE831)).